A 723-amino-acid chain; its full sequence is Pentatricopeptide repeat-containing protein At5g50280, chloroplastic (723 aa).

A chloroplast-targeting transit peptide spans 1 to 44 (MSMASSSLATQSFFSSFPLSHRLHFPVPYLLLRSSFFRKPLSLS). The disordered stretch occupies residues 70–97 (IQQPENSTINSEESECEEEDDEEGDDFT). Residues 81 to 97 (EESECEEEDDEEGDDFT) are compositionally biased toward acidic residues. PPR repeat units lie at residues 272-306 (DVRL…NVYP), 307-342 (DNVT…GVKW), 343-377 (SQDV…GIRS), 378-412 (NTIV…GLKP), 413-447 (SAAT…GLEP), 448-483 (NVKS…GLKP), 484-518 (SSHS…GIKP), 519-553 (SVET…KIKG), 554-588 (TRIT…GLQP), 589-623 (SVMT…NLKP), and 624-658 (DSIT…GQVP). The tract at residues 700-723 (TKGKKDEFWKYKTNRTTSPGRHRS) is disordered. Residues 713 to 723 (NRTTSPGRHRS) are compositionally biased toward polar residues.

The protein belongs to the PPR family. P subfamily.

It localises to the plastid. The protein localises to the chloroplast. The sequence is that of Pentatricopeptide repeat-containing protein At5g50280, chloroplastic (EMB1006) from Arabidopsis thaliana (Mouse-ear cress).